The sequence spans 348 residues: MSSEPLVLGIETSCDETGVGIVRGHTLLADAVASSVDEHARFGGVVPEVASRAHLEAMVPTIERACETAGIRLYDVDAIAVTSGPGLAGALMVGVAAAKALAVGLGKPIYGVNHLAAHVAVDQLEHGPLPEPCLALLVSGGHSSLLRVEDVTSGVDPMGATIDDAAGEAFDKVARLLGLPFPGGPYIDRAAREGSTVYVDFPRGLTSRRDLERHRFDFSFSGLKTAVARWVEARERSGEPVPVADVAASFQEAVCDVLTRKAIDAASSAGIEDLLIGGGVAANSRLRVLAEERAAARGIRVRVPRPGLCTDNGAMVAALGAEMVARGRTPSPLDLPADSSLPVTEVLV.

Residues His114 and His118 each contribute to the Fe cation site. Substrate contacts are provided by residues 137–141 (LVSGG), Asp171, Gly184, Asp188, and Asn283. Asp311 contacts Fe cation.

The protein belongs to the KAE1 / TsaD family. Fe(2+) is required as a cofactor.

It is found in the cytoplasm. It catalyses the reaction L-threonylcarbamoyladenylate + adenosine(37) in tRNA = N(6)-L-threonylcarbamoyladenosine(37) in tRNA + AMP + H(+). In terms of biological role, required for the formation of a threonylcarbamoyl group on adenosine at position 37 (t(6)A37) in tRNAs that read codons beginning with adenine. Is involved in the transfer of the threonylcarbamoyl moiety of threonylcarbamoyl-AMP (TC-AMP) to the N6 group of A37, together with TsaE and TsaB. TsaD likely plays a direct catalytic role in this reaction. This chain is tRNA N6-adenosine threonylcarbamoyltransferase, found in Nocardioides sp. (strain ATCC BAA-499 / JS614).